We begin with the raw amino-acid sequence, 196 residues long: Large ribosomal subunit protein uL10 (196 aa).

The tract at residues 167–196 is disordered; the sequence is EKKAAEGPAEAPQPATEPPAEAPEAPADAE.

It belongs to the universal ribosomal protein uL10 family. As to quaternary structure, part of the ribosomal stalk of the 50S ribosomal subunit. The N-terminus interacts with L11 and the large rRNA to form the base of the stalk. The C-terminus forms an elongated spine to which L12 dimers bind in a sequential fashion forming a multimeric L10(L12)X complex.

Its function is as follows. Forms part of the ribosomal stalk, playing a central role in the interaction of the ribosome with GTP-bound translation factors. The sequence is that of Large ribosomal subunit protein uL10 from Mycolicibacterium paratuberculosis (strain ATCC BAA-968 / K-10) (Mycobacterium paratuberculosis).